Consider the following 62-residue polypeptide: uncharacterized protein (62 aa).

This is an uncharacterized protein from Sinorhizobium fredii (strain NBRC 101917 / NGR234).